Consider the following 376-residue polypeptide: UDP-N-acetylglucosamine 2-epimerase (376 aa).

Residues R10, K15, D95, E117, H213, Q271, F276, 290-292 (SGG), E296, and R313 each bind substrate.

Belongs to the UDP-N-acetylglucosamine 2-epimerase family. Homodimer.

It is found in the cytoplasm. It catalyses the reaction UDP-N-acetyl-alpha-D-glucosamine = UDP-N-acetyl-alpha-D-mannosamine. The protein operates within bacterial outer membrane biogenesis; enterobacterial common antigen biosynthesis. Allosterically activated by its substrate, UDP-GlcNAc. Its function is as follows. Catalyzes the reversible epimerization at C-2 of UDP-N-acetylglucosamine (UDP-GlcNAc) and thereby provides bacteria with UDP-N-acetylmannosamine (UDP-ManNAc), the activated donor of ManNAc residues. Also involved in bacteriophage N4 adsorption. The chain is UDP-N-acetylglucosamine 2-epimerase from Escherichia coli (strain K12).